A 130-amino-acid polypeptide reads, in one-letter code: MNYSKIFIFGIISLILMALFSSTVESVSLKNLKIKNNNNNNNNIENKHKTKKSLELTETQDFGSVKCPDGSLCPNSNTCCSASDGSYACCPTPNAQCCSDKQHCCPYQFTCGNGGNICKPQQGLRFSFNR.

The first 26 residues, 1-26 (MNYSKIFIFGIISLILMALFSSTVES), serve as a signal peptide directing secretion. Intrachain disulfides connect Cys67–Cys79 and Cys73–Cys89.

It belongs to the granulin family. Post-translationally, granulins are disulfide bridged.

It localises to the secreted. This is Granulin (grn) from Dictyostelium discoideum (Social amoeba).